The sequence spans 447 residues: MSSNIPQNAVEVDTLSSIYTYKELSIDKLKHEYEITVGSNYIEQKVNSRLQEIAKNAKLPGFRSGKMPYDLVVTNYKNEALEYVVNSTIDYCSSDLMKKIEVKSHIYPKVDIMSLPNLNEEGEKSNFVYKLSFESMPEVPVIDLDKINLKKVEARIEEEDIKGFVDSIKTRFPSFVSVDDASYQAKNGDKLVIDFEGRIRNKLFQGGSNKNFKVTLGSGTFINGFENQLTGMKKGETKSFKLKFPEDYQTISLAGQEANFSVRVNDIQVAEDFGGDDEMAKKIGFRDCSSLKNHAKEVIGGQCEEMRDLLIKKELFDYLDANYSFDLPTDVVRQEQQRVERELGSKDDSCKEAERRVKLAMLFMKFSTEHKISLTQNDILNVIVNQYISKDVPFDRVFKHFKSDRQFQELVRGQALEHKVTSYIIEKVNKEEQIVSVKELKELFGNI.

Positions 188 to 273 (GDKLVIDFEG…VNDIQVAEDF (86 aa)) constitute a PPIase FKBP-type domain.

It belongs to the FKBP-type PPIase family. Tig subfamily.

It localises to the cytoplasm. The enzyme catalyses [protein]-peptidylproline (omega=180) = [protein]-peptidylproline (omega=0). In terms of biological role, involved in protein export. Acts as a chaperone by maintaining the newly synthesized protein in an open conformation. Functions as a peptidyl-prolyl cis-trans isomerase. The sequence is that of Trigger factor from Wolbachia sp. subsp. Brugia malayi (strain TRS).